The chain runs to 424 residues: Hemagglutinin-esterase (424 aa).

Signal peptides lie at residues 1-16 (MFLL…IIGS) and 1-18 (MFLL…GSLG). The segment at 7–127 (FVLVSCIIGS…SNDIWMQNKG (121 aa)) is esterase domain 1. At 17-392 (LGFDNPPTNV…PICVYDPLPL (376 aa)) the chain is on the virion surface side. The active-site Nucleophile is Ser-40. Residues Cys-44 and Cys-65 are joined by a disulfide bond. 5 N-linked (GlcNAc...) asparagine; by host glycosylation sites follow: Asn-54, Asn-89, Asn-153, Asn-236, and Asn-301. Disulfide bonds link Cys-113-Cys-162, Cys-197-Cys-276, and Cys-205-Cys-249. Residues 128-266 (LFYTQVYKNM…GNYLAISNEL (139 aa)) form a receptor binding region. Residues 267 to 379 (LLTVPTKAIC…RCPTAADINT (113 aa)) form an esterase domain 2 region. Cys-307 and Cys-312 are oxidised to a cystine. Asn-316 carries an N-linked (GlcNAc...) asparagine; by host glycan. Active-site charge relay system residues include Asp-326 and His-329. An intrachain disulfide couples Cys-347 to Cys-371. The N-linked (GlcNAc...) asparagine; by host glycan is linked to Asn-358. A helical transmembrane segment spans residues 393 to 413 (ILLGILLGVAVIIIVVLLLYF). Residues 414–424 (MVDNGTRLHDA) lie on the Intravirion side of the membrane. A glycan (N-linked (GlcNAc...) asparagine; by host) is linked at Asn-417.

It belongs to the influenza type C/coronaviruses hemagglutinin-esterase family. In terms of assembly, homodimer; disulfide-linked. Forms a complex with the M protein in the pre-Golgi. Associates then with S-M complex to form a ternary complex S-M-HE. In terms of processing, N-glycosylated in the host RER.

Its subcellular location is the virion membrane. The protein resides in the host cell membrane. The enzyme catalyses N-acetyl-9-O-acetylneuraminate + H2O = N-acetylneuraminate + acetate + H(+). It carries out the reaction N-acetyl-4-O-acetylneuraminate + H2O = N-acetylneuraminate + acetate + H(+). Its function is as follows. Structural protein that makes short spikes at the surface of the virus. Contains receptor binding and receptor-destroying activities. Mediates de-O-acetylation of N-acetyl-4-O-acetylneuraminic acid, which is probably the receptor determinant recognized by the virus on the surface of erythrocytes and susceptible cells. This receptor-destroying activity is important for virus release as it probably helps preventing self-aggregation and ensures the efficient spread of the progeny virus from cell to cell. May serve as a secondary viral attachment protein for initiating infection, the spike protein being the major one. May become a target for both the humoral and the cellular branches of the immune system. The sequence is that of Hemagglutinin-esterase from Bos taurus (Bovine).